The following is a 481-amino-acid chain: Proton-coupled amino acid transporter 2 (481 aa).

Over Met-1–Gln-56 the chain is Cytoplasmic. A disordered region spans residues Ser-26–Thr-49. The span at Lys-29 to Gly-40 shows a compositional bias: polar residues. Residues Thr-57–Val-77 traverse the membrane as a helical segment. Residues Lys-78–Asn-79 are Extracellular-facing. Residues Ala-80–Met-100 traverse the membrane as a helical segment. At His-101–His-146 the chain is on the cytoplasmic side. The helical transmembrane segment at Ala-147–Leu-167 threads the bilayer. The Extracellular portion of the chain corresponds to Ala-168 to Pro-195. A helical membrane pass occupies residues Thr-196 to Ile-216. The Cytoplasmic portion of the chain corresponds to Arg-217–Arg-220. A helical transmembrane segment spans residues Val-221–Gly-241. The Extracellular portion of the chain corresponds to Gln-242–Thr-262. A helical transmembrane segment spans residues Tyr-263 to Leu-283. Topologically, residues Glu-284 to Thr-295 are cytoplasmic. The helical transmembrane segment at Ile-296–Tyr-316 threads the bilayer. Residues Leu-317–Leu-343 are Extracellular-facing. Residues Tyr-344–Ile-364 form a helical membrane-spanning segment. Residues Pro-365–Leu-377 are Cytoplasmic-facing. Residues Pro-378–Ile-398 traverse the membrane as a helical segment. The Extracellular portion of the chain corresponds to Pro-399–Asp-402. The chain crosses the membrane as a helical span at residues Leu-403 to Leu-423. The Cytoplasmic portion of the chain corresponds to Leu-424–Leu-444. The chain crosses the membrane as a helical span at residues Ile-445–Ile-465. The Extracellular segment spans residues Arg-466 to Gln-481.

This sequence belongs to the amino acid/polyamine transporter 2 family. Expressed in lung and spleen, and to a lower extent in brain, heart, kidney and skeletal muscle.

The protein resides in the cell membrane. It localises to the endoplasmic reticulum membrane. The protein localises to the recycling endosome membrane. It catalyses the reaction glycine(in) + H(+)(in) = glycine(out) + H(+)(out). The enzyme catalyses L-alanine(in) + H(+)(in) = L-alanine(out) + H(+)(out). It carries out the reaction D-alanine(in) + H(+)(in) = D-alanine(out) + H(+)(out). The catalysed reaction is L-proline(out) + H(+)(out) = L-proline(in) + H(+)(in). It catalyses the reaction D-proline(out) + H(+)(out) = D-proline(in) + H(+)(in). The enzyme catalyses 4-hydroxy-L-proline(in) + H(+)(in) = 4-hydroxy-L-proline(out) + H(+)(out). It carries out the reaction L-serine(in) + H(+)(in) = L-serine(out) + H(+)(out). The catalysed reaction is D-serine(out) + H(+)(out) = D-serine(in) + H(+)(in). It catalyses the reaction beta-alanine(in) + H(+)(in) = beta-alanine(out) + H(+)(out). The enzyme catalyses 4-aminobutanoate(in) + H(+)(in) = 4-aminobutanoate(out) + H(+)(out). It carries out the reaction sarcosine(in) + H(+)(in) = sarcosine(out) + H(+)(out). The catalysed reaction is N,N-dimethylglycine(in) + H(+)(in) = N,N-dimethylglycine(out) + H(+)(out). With respect to regulation, inhibited by L- and D-pipecolic acid, nipecotic acid, isonipecotic acid, L- and D-cycloserine, and L-2-azetidine-carboxylate. Its function is as follows. Electrogenic proton/amino acid symporter with a high selectivity for the small side chains amino acids glycine, alanine and proline, where both L- and D-enantiomers are transported. Extension of the backbone length, as in beta-alanine and 4-aminobutanoate or methylation of the amino group, as in sarcosine and N,N-dimethylglycine, are also tolerated but decrease transport efficiency. A free carboxyl group is preferred. In Rattus norvegicus (Rat), this protein is Proton-coupled amino acid transporter 2.